The following is a 302-amino-acid chain: Citrate lyase subunit beta (302 aa).

Substrate is bound by residues Arg-76 and Glu-139. 2 residues coordinate Mg(2+): Glu-139 and Asp-166.

This sequence belongs to the HpcH/HpaI aldolase family. Citrate lyase beta subunit subfamily. In terms of assembly, oligomer with a subunit composition of (alpha,beta,gamma)6. Requires Mg(2+) as cofactor.

It localises to the cytoplasm. It carries out the reaction citrate = oxaloacetate + acetate. The enzyme catalyses (3S)-citryl-CoA = oxaloacetate + acetyl-CoA. Represents a citryl-ACP lyase. The protein is Citrate lyase subunit beta (citE) of Escherichia coli O6:H1 (strain CFT073 / ATCC 700928 / UPEC).